The chain runs to 316 residues: Putative HTH-type transcriptional regulatory protein PYRAB03670 (316 aa).

In terms of domain architecture, HTH cro/C1-type spans 131 to 189 (LKDLREKHGYSLSELANILGVSRKSLQRYEKGDSMVTLEVALRLEEVFDEALVKPINVL). A DNA-binding region (H-T-H motif) is located at residues 142 to 161 (LSELANILGVSRKSLQRYEK).

This Pyrococcus abyssi (strain GE5 / Orsay) protein is Putative HTH-type transcriptional regulatory protein PYRAB03670.